Consider the following 481-residue polypeptide: Glutamyl-tRNA(Gln) amidotransferase subunit A (481 aa).

Catalysis depends on charge relay system residues K74 and S149. The active-site Acyl-ester intermediate is S173.

It belongs to the amidase family. GatA subfamily. As to quaternary structure, heterotrimer of A, B and C subunits.

The catalysed reaction is L-glutamyl-tRNA(Gln) + L-glutamine + ATP + H2O = L-glutaminyl-tRNA(Gln) + L-glutamate + ADP + phosphate + H(+). Its function is as follows. Allows the formation of correctly charged Gln-tRNA(Gln) through the transamidation of misacylated Glu-tRNA(Gln) in organisms which lack glutaminyl-tRNA synthetase. The reaction takes place in the presence of glutamine and ATP through an activated gamma-phospho-Glu-tRNA(Gln). The chain is Glutamyl-tRNA(Gln) amidotransferase subunit A from Francisella philomiragia subsp. philomiragia (strain ATCC 25017 / CCUG 19701 / FSC 153 / O#319-036).